The primary structure comprises 539 residues: MALTQVETEIVPVSVDGETLTVEAVRRVAEERATVDVPAESIAKAQKSREIFEGIAEQNIPIYGVTTGYGEMIYMQVDKSKEVELQTNLVRSHSAGVGPLFAEDEARAIVAARLNTLAKGHSAVRPIILERLAQYLNEGITPAIPEIGSLGASGDLAPLSHVASTLIGEGYVLRDGRPVETAQVLAERGIEPLELRFKEGLALINGTSGMTGLGSLVVGRALEQAQQAEIVTALLIEAVRGSTSPFLAEGHDIARPHEGQIDTAANMRALMRGSGLTVEHADLRRELQKDKEAGKDVQRSEIYLQKAYSLRAIPQVVGAVRDTLYHARHKLRIELNSANDNPLFFEGKEIFHGANFHGQPIAFAMDFVTIALTQLGVLAERQINRVLNRHLSYGLPEFLVSGDPGLHSGFAGAQYPATALVAENRTIGPASTQSVPSNGDNQDVVSMGLISARNARRVLSNNNKILAVEYLAAAQAVDISGRFDGLSPAAKATYEAVRRLVPTLGVDRYMADDIELVADALSRGEFLRAIARETDIQLR.

Tyr-63 acts as the Proton donor/acceptor in catalysis. His-93 serves as a coordination point for substrate. A cross-link (5-imidazolinone (Ala-Gly)) is located at residues 152-154 (ASG). Residue Ser-153 is modified to 2,3-didehydroalanine (Ser). Substrate is bound by residues Asn-205 and Arg-311.

This sequence belongs to the TAL/TAM family. Homotetramer; dimer of dimers. In terms of processing, contains an active site 4-methylidene-imidazol-5-one (MIO), which is formed autocatalytically by cyclization and dehydration of residues Ala-Ser-Gly.

The catalysed reaction is L-tyrosine = 3-amino-3-(4-hydroxyphenyl)propanoate. It carries out the reaction L-tyrosine = (E)-4-coumarate + NH4(+). Functionally, involved in the biosynthesis of the enediyne antitumor antibiotic C-1027. Catalyzes the MIO-dependent deamination of L-tyrosine generating the corresponding alpha,beta-unsaturated acid, (S)-beta-tyrosine. This Streptomyces globisporus protein is MIO-dependent tyrosine 2,3-aminomutase.